The following is a 281-amino-acid chain: Pantothenate synthetase (281 aa).

30–37 (MGYLHEGH) contributes to the ATP binding site. The active-site Proton donor is His-37. Gln-61 serves as a coordination point for (R)-pantoate. Gln-61 is a binding site for beta-alanine. Position 147–150 (147–150 (GEKD)) interacts with ATP. Gln-153 provides a ligand contact to (R)-pantoate. Residues Ile-176 and 184-187 (KSSR) contribute to the ATP site.

It belongs to the pantothenate synthetase family. Homodimer.

It is found in the cytoplasm. The enzyme catalyses (R)-pantoate + beta-alanine + ATP = (R)-pantothenate + AMP + diphosphate + H(+). It functions in the pathway cofactor biosynthesis; (R)-pantothenate biosynthesis; (R)-pantothenate from (R)-pantoate and beta-alanine: step 1/1. Catalyzes the condensation of pantoate with beta-alanine in an ATP-dependent reaction via a pantoyl-adenylate intermediate. This is Pantothenate synthetase from Clostridium botulinum (strain Langeland / NCTC 10281 / Type F).